Reading from the N-terminus, the 576-residue chain is Trehalase 2 (576 aa).

It belongs to the glycosyl hydrolase 15 family.

The enzyme catalyses alpha,alpha-trehalose + H2O = alpha-D-glucose + beta-D-glucose. It participates in glycan degradation; trehalose degradation; D-glucose from alpha,alpha-trehalose: step 1/1. In terms of biological role, catalyzes the hydrolysis of alpha,alpha-trehalose into two molecules of D-glucose. This Sulfolobus acidocaldarius (strain ATCC 33909 / DSM 639 / JCM 8929 / NBRC 15157 / NCIMB 11770) protein is Trehalase 2 (treH2).